The sequence spans 450 residues: UDP-N-acetylmuramoylalanine--D-glutamate ligase (450 aa).

An ATP-binding site is contributed by 111-117 (GTNGKST).

The protein belongs to the MurCDEF family.

The protein localises to the cytoplasm. The enzyme catalyses UDP-N-acetyl-alpha-D-muramoyl-L-alanine + D-glutamate + ATP = UDP-N-acetyl-alpha-D-muramoyl-L-alanyl-D-glutamate + ADP + phosphate + H(+). Its pathway is cell wall biogenesis; peptidoglycan biosynthesis. Cell wall formation. Catalyzes the addition of glutamate to the nucleotide precursor UDP-N-acetylmuramoyl-L-alanine (UMA). The sequence is that of UDP-N-acetylmuramoylalanine--D-glutamate ligase from Rickettsia bellii (strain RML369-C).